Here is a 446-residue protein sequence, read N- to C-terminus: Maltoporin (446 aa).

Residues 1 to 25 form the signal peptide; it reads MMITLRKLPLAVAVAAGVMSAQAMA.

It belongs to the porin LamB (TC 1.B.3) family. As to quaternary structure, homotrimer formed of three 18-stranded antiparallel beta-barrels, containing three independent channels.

It is found in the cell outer membrane. It catalyses the reaction beta-maltose(in) = beta-maltose(out). In terms of biological role, involved in the transport of maltose and maltodextrins. The protein is Maltoporin of Escherichia coli O157:H7 (strain EC4115 / EHEC).